Reading from the N-terminus, the 371-residue chain is Loganic acid O-methyltransferase (371 aa).

Tyr-31 is a binding site for S-adenosyl-L-homocysteine. Positions 37 and 38 each coordinate loganate. S-adenosyl-L-homocysteine is bound by residues Cys-78, Asn-83, Asp-114, His-115, Ser-141, and Phe-142. Positions 162 and 163 each coordinate loganate. Asn-180 contacts Mg(2+). Residues Ala-241 and His-245 each contribute to the loganate site. Mg(2+)-binding residues include Asp-267, Phe-269, and Asn-270. Loganate is bound by residues Gln-273 and Gln-316.

The protein belongs to the methyltransferase superfamily. Type-7 methyltransferase family. Homodimer. Requires Mg(2+) as cofactor. As to expression, expressed in leaves (especially in leaf epidermis), flowers, siliques and stems, and, at low levels, in hairy roots.

It catalyses the reaction loganate + S-adenosyl-L-methionine = loganin + S-adenosyl-L-homocysteine. It participates in alkaloid biosynthesis. With respect to regulation, strongly repressed by loganin and slightly by S-adenosyl-L-homocysteine. Its function is as follows. Component of the seco-iridoid and derivatives monoterpenoid indole alkaloids (MIAs, e.g. vinblastine and ajmalicine) biosynthesis pathway. Catalyzes the methylation of loganic acid (6S,7R) to produce loganin. Weak activity with secologanic acid as substrate. Inactive on deoxyloganic, dehydrologanic, epiloganic and loganetic acid. The chain is Loganic acid O-methyltransferase from Catharanthus roseus (Madagascar periwinkle).